The sequence spans 1177 residues: Lysylphosphatidylglycerol biosynthesis bifunctional protein LysX (1177 aa).

Disordered stretches follow at residues 1–40 (MRRA…AKFV) and 61–85 (VTLA…PRNR). Residues 1 to 676 (MRRAGRSRQF…LLHHDGSAPD (676 aa)) are phosphatidylglycerol lysyltransferase. The segment covering 65–85 (SPGSRSGSGPRSGPRLGPRNR) has biased composition (low complexity). 6 helical membrane-spanning segments follow: residues 93–113 (VPAA…LGSV), 135–155 (FPDT…ALTA), 159–179 (IAWL…VADI), 189–209 (IFGE…LVLA), 227–247 (AVLV…VELF), and 281–301 (VFLN…ATIV). Residues 673–693 (SAPDVSGLRPERTDAEEARSR) form a disordered region. A lysine--tRNA ligase region spans residues 677–1177 (VSGLRPERTD…TLPFPLAKPH (501 aa)). The segment covering 681–693 (RPERTDAEEARSR) has biased composition (basic and acidic residues). A DNA-binding region (OB) is located at residues 738–816 (ITVAGRILRI…SLIVTDWRMI (79 aa)). 2 residues coordinate Mg(2+): Asp-1089 and Glu-1096.

The protein in the N-terminal section; belongs to the LPG synthetase family. This sequence in the C-terminal section; belongs to the class-II aminoacyl-tRNA synthetase family. Mg(2+) is required as a cofactor.

It localises to the cell membrane. The catalysed reaction is tRNA(Lys) + L-lysine + ATP = L-lysyl-tRNA(Lys) + AMP + diphosphate. It carries out the reaction L-lysyl-tRNA(Lys) + a 1,2-diacyl-sn-glycero-3-phospho-(1'-sn-glycerol) = a 1,2-diacyl-sn-glycero-3-phospho-1'-(3'-O-L-lysyl)-sn-glycerol + tRNA(Lys). In terms of biological role, catalyzes the production of L-lysyl-tRNA(Lys)transfer and the transfer of a lysyl group from L-lysyl-tRNA(Lys) to membrane-bound phosphatidylglycerol (PG), which produces lysylphosphatidylglycerol (LPG), one of the components of the bacterial membrane with a positive net charge. LPG synthesis contributes to the resistance to cationic antimicrobial peptides (CAMPs) and likely protects M.tuberculosis against the CAMPs produced by competiting microorganisms (bacteriocins). In fact, the modification of anionic phosphatidylglycerol with positively charged L-lysine results in repulsion of the peptides. This Mycolicibacterium paratuberculosis (strain ATCC BAA-968 / K-10) (Mycobacterium paratuberculosis) protein is Lysylphosphatidylglycerol biosynthesis bifunctional protein LysX (lysX).